We begin with the raw amino-acid sequence, 218 residues long: Ropporin-1-like protein (218 aa).

In terms of domain architecture, RIIa spans P17–D54. The segment at Q199 to K218 is disordered.

The protein belongs to the ropporin family. As to quaternary structure, component of axonemal radial spoke complexes.

It is found in the cell projection. Its subcellular location is the cilium. The protein localises to the flagellum. Functionally, functions as part of axonemal radial spoke complexes that play an important part in the motility of sperm and cilia. Important for male fertility. Involved in fibrous sheath integrity and sperm motility, plays a role in PKA-dependent signaling processes required for spermatozoa capacitation. In Danio rerio (Zebrafish), this protein is Ropporin-1-like protein (ropn1l).